We begin with the raw amino-acid sequence, 322 residues long: Ferrochelatase (322 aa).

The Fe cation site is built by His-194 and Glu-275.

This sequence belongs to the ferrochelatase family.

The protein resides in the cytoplasm. It catalyses the reaction heme b + 2 H(+) = protoporphyrin IX + Fe(2+). The protein operates within porphyrin-containing compound metabolism; protoheme biosynthesis; protoheme from protoporphyrin-IX: step 1/1. Functionally, catalyzes the ferrous insertion into protoporphyrin IX. The polypeptide is Ferrochelatase (Yersinia enterocolitica serotype O:8 / biotype 1B (strain NCTC 13174 / 8081)).